Consider the following 602-residue polypeptide: Aryl hydrocarbon receptor protein 1 (602 aa).

Positions 1-2 (MY) are excised as a propeptide. Basic residues predominate over residues 1–12 (MYASKRRQRNFK). Residues 1 to 28 (MYASKRRQRNFKRVRDPPKQLTNTNPSK) form a disordered region. Short sequence motifs (nuclear localization signal) lie at residues 5–8 (KRRQ) and 28–33 (KRHRER). Residues 18–71 (PKQLTNTNPSKRHRERLNGELETVAMLLPYDSSTISRLDKLSVLRLAVSFLQCK) form the bHLH domain. Required for maintaining the overall integrity of the AHR:ARNT heterodimer and its transcriptional activity regions lie at residues 41 to 73 (VAML…CKAH), 133 to 141 (SLKSLGGFI), and 266 to 268 (ICV). Residues 55–63 (LDKLSVLRL) carry the Nuclear export signal motif. Residues 126 to 196 (ESNFEEISLK…QQLDSNFHIP (71 aa)) enclose the PAS domain. Positions 440–467 (STSNSLFPSVPVPTPTTTKANRRRKENS) are disordered.

Interacts with daf-21/hsp90. Interacts with aha-1. Expressed in many distinct neuronal cells including RMED, RMEV, RMEL and RMER. Functions in URX neurons to promote aggregation behavior.

The protein resides in the nucleus. Its function is as follows. Probable ligand-activated transcriptional activator. Acts as a transcriptional regulator in GABAergic motor neuron cell fate specification and development. Promotes cell-type-specific expression of guanylate cyclase genes that have key roles in aggregation behavior and hyperoxia avoidance. Has no role in carbon dioxide avoidance. The protein is Aryl hydrocarbon receptor protein 1 of Caenorhabditis elegans.